Reading from the N-terminus, the 267-residue chain is GTP cyclohydrolase FolE2 2 (267 aa).

The protein belongs to the GTP cyclohydrolase IV family.

The catalysed reaction is GTP + H2O = 7,8-dihydroneopterin 3'-triphosphate + formate + H(+). It functions in the pathway cofactor biosynthesis; 7,8-dihydroneopterin triphosphate biosynthesis; 7,8-dihydroneopterin triphosphate from GTP: step 1/1. Converts GTP to 7,8-dihydroneopterin triphosphate. In Cupriavidus metallidurans (strain ATCC 43123 / DSM 2839 / NBRC 102507 / CH34) (Ralstonia metallidurans), this protein is GTP cyclohydrolase FolE2 2.